A 312-amino-acid chain; its full sequence is Probable phytanoyl-CoA dioxygenase (312 aa).

Residues Lys-84, Met-124, 142–144, and Trp-160 contribute to the 2-oxoglutarate site; that span reads HQD. Positions 142 and 144 each coordinate Fe cation. Position 231 (His-231) interacts with Fe cation. 2-oxoglutarate contacts are provided by Ser-233 and Arg-242.

Belongs to the PhyH family. Fe cation serves as cofactor. L-ascorbate is required as a cofactor.

The enzyme catalyses phytanoyl-CoA + 2-oxoglutarate + O2 = 2-hydroxyphytanoyl-CoA + succinate + CO2. Its pathway is lipid metabolism; fatty acid metabolism. In terms of biological role, converts phytanoyl-CoA to 2-hydroxyphytanoyl-CoA. This Caenorhabditis elegans protein is Probable phytanoyl-CoA dioxygenase.